Here is a 475-residue protein sequence, read N- to C-terminus: 3-hydroxyadipyl-CoA dehydrogenase (475 aa).

The protein belongs to the 3-hydroxyacyl-CoA dehydrogenase family. Homotrimer.

It catalyses the reaction (3S)-3-hydroxyadipyl-CoA + NAD(+) = 3-oxoadipyl-CoA + NADH + H(+). Its pathway is aromatic compound metabolism; phenylacetate degradation. Functionally, catalyzes the oxidation of 3-hydroxyadipyl-CoA to yield 3-oxoadipyl-CoA. This is 3-hydroxyadipyl-CoA dehydrogenase (paaH) from Escherichia coli (strain K12).